Here is a 218-residue protein sequence, read N- to C-terminus: Octanoyltransferase (218 aa).

A BPL/LPL catalytic domain is found at 32 to 214; sequence VLTADEIWLV…HFTQLLGYND (183 aa). Residues 71–78, 143–145, and 156–158 each bind substrate; these read RGGQITYH, SLG, and GLA. Residue Cys-174 is the Acyl-thioester intermediate of the active site.

The protein belongs to the LipB family.

The protein resides in the cytoplasm. The catalysed reaction is octanoyl-[ACP] + L-lysyl-[protein] = N(6)-octanoyl-L-lysyl-[protein] + holo-[ACP] + H(+). Its pathway is protein modification; protein lipoylation via endogenous pathway; protein N(6)-(lipoyl)lysine from octanoyl-[acyl-carrier-protein]: step 1/2. Its function is as follows. Catalyzes the transfer of endogenously produced octanoic acid from octanoyl-acyl-carrier-protein onto the lipoyl domains of lipoate-dependent enzymes. Lipoyl-ACP can also act as a substrate although octanoyl-ACP is likely to be the physiological substrate. This Histophilus somni (strain 2336) (Haemophilus somnus) protein is Octanoyltransferase.